The sequence spans 248 residues: UPF0246 protein RC0754 (248 aa).

It belongs to the UPF0246 family.

This Rickettsia conorii (strain ATCC VR-613 / Malish 7) protein is UPF0246 protein RC0754.